The chain runs to 557 residues: Dihydroxy-acid dehydratase (557 aa).

Mg(2+) is bound at residue Asp-78. Cys-119 contacts [2Fe-2S] cluster. Positions 120 and 121 each coordinate Mg(2+). Position 121 is an N6-carboxylysine (Lys-121). Residue Cys-192 participates in [2Fe-2S] cluster binding. Residue Glu-442 coordinates Mg(2+). Catalysis depends on Ser-468, which acts as the Proton acceptor.

Belongs to the IlvD/Edd family. As to quaternary structure, homodimer. [2Fe-2S] cluster is required as a cofactor. The cofactor is Mg(2+).

It carries out the reaction (2R)-2,3-dihydroxy-3-methylbutanoate = 3-methyl-2-oxobutanoate + H2O. It catalyses the reaction (2R,3R)-2,3-dihydroxy-3-methylpentanoate = (S)-3-methyl-2-oxopentanoate + H2O. The protein operates within amino-acid biosynthesis; L-isoleucine biosynthesis; L-isoleucine from 2-oxobutanoate: step 3/4. It functions in the pathway amino-acid biosynthesis; L-valine biosynthesis; L-valine from pyruvate: step 3/4. Its function is as follows. Functions in the biosynthesis of branched-chain amino acids. Catalyzes the dehydration of (2R,3R)-2,3-dihydroxy-3-methylpentanoate (2,3-dihydroxy-3-methylvalerate) into 2-oxo-3-methylpentanoate (2-oxo-3-methylvalerate) and of (2R)-2,3-dihydroxy-3-methylbutanoate (2,3-dihydroxyisovalerate) into 2-oxo-3-methylbutanoate (2-oxoisovalerate), the penultimate precursor to L-isoleucine and L-valine, respectively. The chain is Dihydroxy-acid dehydratase from Bacillus cereus (strain ZK / E33L).